We begin with the raw amino-acid sequence, 761 residues long: Phosphoribosylformylglycinamidine synthase subunit PurL (761 aa).

A compositionally biased stretch (polar residues) spans M1–S13. Residues M1–E23 are disordered. The active site involves H57. Positions 60 and 104 each coordinate ATP. E106 is a Mg(2+) binding site. Substrate-binding positions include S107–H110 and R129. H108 acts as the Proton acceptor in catalysis. D130 lines the Mg(2+) pocket. Residue Q259 participates in substrate binding. D287 provides a ligand contact to Mg(2+). Position 331-333 (E331–Q333) interacts with substrate. ATP is bound by residues N519 and G556. N557 lines the Mg(2+) pocket. S559 is a binding site for substrate.

This sequence belongs to the FGAMS family. Monomer. Part of the FGAM synthase complex composed of 1 PurL, 1 PurQ and 2 PurS subunits.

Its subcellular location is the cytoplasm. The catalysed reaction is N(2)-formyl-N(1)-(5-phospho-beta-D-ribosyl)glycinamide + L-glutamine + ATP + H2O = 2-formamido-N(1)-(5-O-phospho-beta-D-ribosyl)acetamidine + L-glutamate + ADP + phosphate + H(+). The protein operates within purine metabolism; IMP biosynthesis via de novo pathway; 5-amino-1-(5-phospho-D-ribosyl)imidazole from N(2)-formyl-N(1)-(5-phospho-D-ribosyl)glycinamide: step 1/2. Its function is as follows. Part of the phosphoribosylformylglycinamidine synthase complex involved in the purines biosynthetic pathway. Catalyzes the ATP-dependent conversion of formylglycinamide ribonucleotide (FGAR) and glutamine to yield formylglycinamidine ribonucleotide (FGAM) and glutamate. The FGAM synthase complex is composed of three subunits. PurQ produces an ammonia molecule by converting glutamine to glutamate. PurL transfers the ammonia molecule to FGAR to form FGAM in an ATP-dependent manner. PurS interacts with PurQ and PurL and is thought to assist in the transfer of the ammonia molecule from PurQ to PurL. The polypeptide is Phosphoribosylformylglycinamidine synthase subunit PurL (Mycobacteroides abscessus (strain ATCC 19977 / DSM 44196 / CCUG 20993 / CIP 104536 / JCM 13569 / NCTC 13031 / TMC 1543 / L948) (Mycobacterium abscessus)).